Here is a 493-residue protein sequence, read N- to C-terminus: Dipeptide permease D (493 aa).

Over 1–13 the chain is Cytoplasmic; that stretch reads MNKHASQPRAIYY. The chain crosses the membrane as a helical span at residues 14–34; it reads VVALQIWEYFSFYGMRALLIL. The Periplasmic segment spans residues 35-48; sequence YLTNQLKYNDTHAY. Residues 49–69 form a helical membrane-spanning segment; sequence ELFSAYCSLVYVTPILGGFLA. Over 70–77 the chain is Cytoplasmic; the sequence is DKVLGNRM. The helical transmembrane segment at 78-98 threads the bilayer; sequence AVMLGALLMAIGHVVLGASEI. The Periplasmic portion of the chain corresponds to 99 to 100; the sequence is HP. Residues 101–121 form a helical membrane-spanning segment; that stretch reads SFLYLSLAIIVCGYGLFKSNV. Over 122–137 the chain is Cytoplasmic; the sequence is SCLLGELYEPTDPRRD. The helical transmembrane segment at 138-158 threads the bilayer; that stretch reads GGFSLMYAAGNVGSIIAPIAC. The Periplasmic portion of the chain corresponds to 159–166; that stretch reads GYAQEEYS. A helical transmembrane segment spans residues 167–187; sequence WAMGFGLAAVGMIAGLVIFLC. At 188 to 211 the chain is on the cytoplasmic side; that stretch reads GNRHFTHTRGVNKKVLRATNFLLP. Residues 212–232 form a helical membrane-spanning segment; sequence NWGWLLVLLVATPALITILFW. The Periplasmic segment spans residues 233–234; it reads KE. A helical transmembrane segment spans residues 235–255; it reads WSVYALIVATIIGLGVLAKIY. At 256–266 the chain is on the cytoplasmic side; the sequence is RKAENQKQRKE. A helical transmembrane segment spans residues 267–287; that stretch reads LGLIVTLTFFSMLFWAFAQQG. Residues 288–311 are Periplasmic-facing; sequence GSSISLYIDRFVNRDMFGYTVPTA. Residues 312 to 332 form a helical membrane-spanning segment; that stretch reads MFQSINAFAVMLCGVFLAWVV. Over 333 to 343 the chain is Cytoplasmic; it reads KESVAGNRTVR. Residues 344–364 traverse the membrane as a helical segment; the sequence is IWGKFALGLGLMSAGFCILTL. Over 365 to 378 the chain is Periplasmic; it reads SARWSAMYGHSSLP. The helical transmembrane segment at 379-399 threads the bilayer; sequence LMVLGLAVMGFAELFIDPVAM. Over 400–412 the chain is Cytoplasmic; that stretch reads SQITRIEIPGVTG. The chain crosses the membrane as a helical span at residues 413–433; sequence VLTGIYMLLSGAIANYLAGVI. Residues 434–461 are Periplasmic-facing; it reads ADQTSQASFDASGAINYSINAYIEVFDQ. Residues 462 to 482 traverse the membrane as a helical segment; that stretch reads ITWGALACVGLVLMIWLYQAL. Over 483–493 the chain is Cytoplasmic; sequence KFRNRALALES.

It belongs to the major facilitator superfamily. Proton-dependent oligopeptide transporter (POT/PTR) (TC 2.A.17) family. DtpD subfamily.

It localises to the cell inner membrane. Probable proton-dependent permease that transports dipeptides. This chain is Dipeptide permease D (dtpD), found in Escherichia coli (strain K12).